The chain runs to 128 residues: Small ribosomal subunit protein bS6 (128 aa).

The interval 105–128 (AKVTEEEPVEAAPEAKVETTTEEE) is disordered. Residues 117–128 (PEAKVETTTEEE) show a composition bias toward basic and acidic residues.

Belongs to the bacterial ribosomal protein bS6 family.

In terms of biological role, binds together with bS18 to 16S ribosomal RNA. This chain is Small ribosomal subunit protein bS6, found in Geotalea daltonii (strain DSM 22248 / JCM 15807 / FRC-32) (Geobacter daltonii).